A 121-amino-acid polypeptide reads, in one-letter code: Histone H2B.6 (121 aa).

Residues 1–28 (MAPKAEKKPKVEKRVPGKEGETSKKKAK) form a disordered region. N6-acetyllysine is present on residues lysine 7 and lysine 13.

This sequence belongs to the histone H2B family. In terms of assembly, the nucleosome is a histone octamer containing two molecules each of H2A, H2B, H3 and H4 assembled in one H3-H4 heterotetramer and two H2A-H2B heterodimers. The octamer wraps approximately 147 bp of DNA. Post-translationally, can be acetylated to form H2BK6ac and H2BK33ac. Expressed preferentially in meristematic tissues.

It localises to the nucleus. The protein localises to the chromosome. Its function is as follows. Core component of nucleosome. Nucleosomes wrap and compact DNA into chromatin, limiting DNA accessibility to the cellular machineries which require DNA as a template. Histones thereby play a central role in transcription regulation, DNA repair, DNA replication and chromosomal stability. DNA accessibility is regulated via a complex set of post-translational modifications of histones, also called histone code, and nucleosome remodeling. This Triticum aestivum (Wheat) protein is Histone H2B.6 (TH123).